We begin with the raw amino-acid sequence, 880 residues long: Alanine--tRNA ligase (880 aa).

H566, H570, C668, and H672 together coordinate Zn(2+).

Belongs to the class-II aminoacyl-tRNA synthetase family. Zn(2+) serves as cofactor.

It localises to the cytoplasm. It catalyses the reaction tRNA(Ala) + L-alanine + ATP = L-alanyl-tRNA(Ala) + AMP + diphosphate. Catalyzes the attachment of alanine to tRNA(Ala) in a two-step reaction: alanine is first activated by ATP to form Ala-AMP and then transferred to the acceptor end of tRNA(Ala). Also edits incorrectly charged Ser-tRNA(Ala) and Gly-tRNA(Ala) via its editing domain. This is Alanine--tRNA ligase from Alkaliphilus oremlandii (strain OhILAs) (Clostridium oremlandii (strain OhILAs)).